Reading from the N-terminus, the 423-residue chain is Serine--tRNA ligase 2 (423 aa).

Residue 231-233 participates in L-serine binding; that stretch reads TAE. 262–264 lines the ATP pocket; sequence RSE. Residue Glu285 coordinates L-serine. 349-352 is a binding site for ATP; the sequence is EISS. Position 384 (Ser384) interacts with L-serine.

The protein belongs to the class-II aminoacyl-tRNA synthetase family. Type-1 seryl-tRNA synthetase subfamily. Homodimer. The tRNA molecule binds across the dimer.

The protein resides in the cytoplasm. It catalyses the reaction tRNA(Ser) + L-serine + ATP = L-seryl-tRNA(Ser) + AMP + diphosphate + H(+). It carries out the reaction tRNA(Sec) + L-serine + ATP = L-seryl-tRNA(Sec) + AMP + diphosphate + H(+). The protein operates within aminoacyl-tRNA biosynthesis; selenocysteinyl-tRNA(Sec) biosynthesis; L-seryl-tRNA(Sec) from L-serine and tRNA(Sec): step 1/1. Catalyzes the attachment of serine to tRNA(Ser). Is also able to aminoacylate tRNA(Sec) with serine, to form the misacylated tRNA L-seryl-tRNA(Sec), which will be further converted into selenocysteinyl-tRNA(Sec). This is Serine--tRNA ligase 2 from Enterococcus faecalis (strain ATCC 700802 / V583).